The primary structure comprises 376 residues: Glucose-1-phosphate adenylyltransferase (376 aa).

Residues Tyr101, Gly166, 181–182 (EK), and Ser192 contribute to the alpha-D-glucose 1-phosphate site.

It belongs to the bacterial/plant glucose-1-phosphate adenylyltransferase family. Homotetramer.

The enzyme catalyses alpha-D-glucose 1-phosphate + ATP + H(+) = ADP-alpha-D-glucose + diphosphate. Its pathway is glycan biosynthesis; glycogen biosynthesis. Its function is as follows. Involved in the biosynthesis of ADP-glucose, a building block required for the elongation reactions to produce glycogen. Catalyzes the reaction between ATP and alpha-D-glucose 1-phosphate (G1P) to produce pyrophosphate and ADP-Glc. The polypeptide is Glucose-1-phosphate adenylyltransferase (Bacillus thuringiensis (strain Al Hakam)).